The primary structure comprises 500 residues: Probable glycine dehydrogenase (decarboxylating) subunit 2 (500 aa).

Residues 1-25 (MLIFEHSRPGRRNYSQSPKAAEATD) form a disordered region. The residue at position 263 (Lys-263) is an N6-(pyridoxal phosphate)lysine.

Belongs to the GcvP family. C-terminal subunit subfamily. In terms of assembly, the glycine cleavage system is composed of four proteins: P, T, L and H. In this organism, the P 'protein' is a heterodimer of two subunits. Requires pyridoxal 5'-phosphate as cofactor.

It carries out the reaction N(6)-[(R)-lipoyl]-L-lysyl-[glycine-cleavage complex H protein] + glycine + H(+) = N(6)-[(R)-S(8)-aminomethyldihydrolipoyl]-L-lysyl-[glycine-cleavage complex H protein] + CO2. Functionally, the glycine cleavage system catalyzes the degradation of glycine. The P protein binds the alpha-amino group of glycine through its pyridoxal phosphate cofactor; CO(2) is released and the remaining methylamine moiety is then transferred to the lipoamide cofactor of the H protein. In Nitrosospira multiformis (strain ATCC 25196 / NCIMB 11849 / C 71), this protein is Probable glycine dehydrogenase (decarboxylating) subunit 2.